The primary structure comprises 234 residues: Leucyl/phenylalanyl-tRNA--protein transferase (234 aa).

This sequence belongs to the L/F-transferase family.

The protein localises to the cytoplasm. It carries out the reaction N-terminal L-lysyl-[protein] + L-leucyl-tRNA(Leu) = N-terminal L-leucyl-L-lysyl-[protein] + tRNA(Leu) + H(+). It catalyses the reaction N-terminal L-arginyl-[protein] + L-leucyl-tRNA(Leu) = N-terminal L-leucyl-L-arginyl-[protein] + tRNA(Leu) + H(+). The enzyme catalyses L-phenylalanyl-tRNA(Phe) + an N-terminal L-alpha-aminoacyl-[protein] = an N-terminal L-phenylalanyl-L-alpha-aminoacyl-[protein] + tRNA(Phe). Functions in the N-end rule pathway of protein degradation where it conjugates Leu, Phe and, less efficiently, Met from aminoacyl-tRNAs to the N-termini of proteins containing an N-terminal arginine or lysine. The sequence is that of Leucyl/phenylalanyl-tRNA--protein transferase from Enterobacter sp. (strain 638).